The chain runs to 96 residues: Large ribosomal subunit protein uL23 (96 aa).

It belongs to the universal ribosomal protein uL23 family. Part of the 50S ribosomal subunit. Contacts protein L29, and trigger factor when it is bound to the ribosome.

One of the early assembly proteins it binds 23S rRNA. One of the proteins that surrounds the polypeptide exit tunnel on the outside of the ribosome. Forms the main docking site for trigger factor binding to the ribosome. The sequence is that of Large ribosomal subunit protein uL23 from Nitratidesulfovibrio vulgaris (strain DSM 19637 / Miyazaki F) (Desulfovibrio vulgaris).